Here is a 382-residue protein sequence, read N- to C-terminus: Mannitol-1-phosphate 5-dehydrogenase (382 aa).

Ala-3–Gly-14 contributes to the NAD(+) binding site.

Belongs to the mannitol dehydrogenase family.

The enzyme catalyses D-mannitol 1-phosphate + NAD(+) = beta-D-fructose 6-phosphate + NADH + H(+). The sequence is that of Mannitol-1-phosphate 5-dehydrogenase from Tolumonas auensis (strain DSM 9187 / NBRC 110442 / TA 4).